The sequence spans 639 residues: 3-hydroxybenzoate 4-monooxygenase (639 aa).

Residues 34-64, Q73, V166, N212, 269-271, Y317, D349, and S365 contribute to the FAD site; these read DVLIVGCGPAGLTLAAQLAAFPDIRTCIVEQ and RFY.

Belongs to the PheA/TfdB FAD monooxygenase family. As to quaternary structure, homodimer. The cofactor is FAD.

It catalyses the reaction 3-hydroxybenzoate + NADPH + O2 + H(+) = 3,4-dihydroxybenzoate + NADP(+) + H2O. Converts 3-hydroxybenzoate (m-hydroxybenzoate), and to a lesser extent p-hydroxybenzoate, to 3,4-dihydroxybenzoate (protocatechuate). Also acts on a number of analogs of 3-hydroxybenzoate substituted in the 2, 4, 5 and 6 positions. This chain is 3-hydroxybenzoate 4-monooxygenase (mobA), found in Comamonas testosteroni (Pseudomonas testosteroni).